A 197-amino-acid chain; its full sequence is Carnitine operon protein CaiE (197 aa).

The tract at residues T177 to Q197 is disordered. Positions G188–Q197 are enriched in basic and acidic residues.

It belongs to the transferase hexapeptide repeat family.

The protein operates within amine and polyamine metabolism; carnitine metabolism. Its function is as follows. Overproduction of CaiE stimulates the activity of CaiB and CaiD. The sequence is that of Carnitine operon protein CaiE from Proteus sp. (strain LE138).